Reading from the N-terminus, the 138-residue chain is MPKFYCDYCDTYLTHDSPSVRKTHCSGRKHKENVRDYYQKWMEEQAQSLIDKTTTAFQQGRIPPNLFSAPPLGGPMIPPPHPSMMGPPPPGMMPVGPPPGMRMPMGGHMPMMPGPPMMRPLPHPMMVPTRPVMPRPDR.

A Matrin-type zinc finger spans residues Phe-4–Asp-36. Residue Tyr-8 is modified to Phosphotyrosine. Ser-17 carries the phosphoserine modification. The residue at position 52 (Lys-52) is an N6-acetyllysine. The interval Ile-62–Pro-99 is disordered. A compositionally biased stretch (pro residues) spans Leu-72–Pro-99.

Belongs to the U1 small nuclear ribonucleoprotein C family. As to quaternary structure, component of the U1 snRNP. The U1 snRNP is composed of the U1 snRNA and the 7 core Sm proteins SNRPB, SNRPD1, SNRPD2, SNRPD3, SNRPE, SNRPF and SNRPG that assemble in a heptameric protein ring on the Sm site of the small nuclear RNA to form the core snRNP, and at least 3 U1 snRNP-specific proteins SNRNP70/U1-70K, SNRPA/U1-A and SNRPC/U1-C. SNRPC/U1-C interacts with U1 snRNA and the 5' splice-site region of the pre-mRNA. Interacts (via N-terminus) with TIA1 (via C-terminus); thereby promoting spliceosomal U1 snRNP recruitment to 5' splice sites.

Its subcellular location is the nucleus. Component of the spliceosomal U1 snRNP, which is essential for recognition of the pre-mRNA 5' splice-site and the subsequent assembly of the spliceosome. SNRPC/U1-C is directly involved in initial 5' splice-site recognition for both constitutive and regulated alternative splicing. The interaction with the 5' splice-site seems to precede base-pairing between the pre-mRNA and the U1 snRNA. Stimulates commitment or early (E) complex formation by stabilizing the base pairing of the 5' end of the U1 snRNA and the 5' splice-site region. The polypeptide is U1 small nuclear ribonucleoprotein C (Monodelphis domestica (Gray short-tailed opossum)).